A 453-amino-acid chain; its full sequence is Ribosome biogenesis protein SSF2 (453 aa).

Over residues Met-1–His-11 the composition is skewed to basic residues. Disordered stretches follow at residues Met-1 to Ile-22, Lys-275 to Lys-327, and Ala-373 to Glu-453. Positions Met-26–Ser-348 constitute a Brix domain. Positions Ala-373 to Ala-398 are enriched in basic and acidic residues. Positions Lys-399–Ala-409 are enriched in basic residues. The span at Val-440–Glu-453 shows a compositional bias: acidic residues.

In terms of assembly, part of a complex that includes BRX1, RPF1, RPF2 and SSF1 or SSF2.

The protein resides in the nucleus. Its subcellular location is the nucleolus. Required for biogenesis of the 60S ribosomal subunit. This is Ribosome biogenesis protein SSF2 (SSF2) from Saccharomyces cerevisiae (strain ATCC 204508 / S288c) (Baker's yeast).